The primary structure comprises 363 residues: Sensor protein BasS (363 aa).

Residues 1–13 (MHFLRRPISLRQR) are Cytoplasmic-facing. The helical transmembrane segment at 14–34 (LILTIGAILLVFELISVFWLW) threads the bilayer. Over 35–64 (HESTEQIQLFEQALRDNRNNDRHIMREIRE) the chain is Periplasmic. The helical transmembrane segment at 65–88 (AVASLIVPGVFMVSLTLFICYQAV) threads the bilayer. In terms of domain architecture, HAMP spans 89–141 (RRITRPLAELQKELEARTADNLTPIAIHSATLEIEAVVSALNDLVSRLTSTLD). The Cytoplasmic portion of the chain corresponds to 89–363 (RRITRPLAEL…KKDQYVANQI (275 aa)). The region spanning 149 to 357 (DVAHELRTPL…RAWVRLKKDQ (209 aa)) is the Histidine kinase domain. His152 carries the phosphohistidine; by autocatalysis modification.

In terms of processing, autophosphorylated.

The protein localises to the cell inner membrane. The enzyme catalyses ATP + protein L-histidine = ADP + protein N-phospho-L-histidine.. Its function is as follows. Member of the two-component regulatory system BasS/BasR Autophosphorylates and activates BasR by phosphorylation. The chain is Sensor protein BasS (basS) from Escherichia coli (strain K12).